Consider the following 487-residue polypeptide: Cell wall protein TIR4 (487 aa).

The N-terminal stretch at 1–22 (MAYSKITLLAALAAIAYAQTQA) is a signal peptide. A run of 11 repeats spans residues 137-148 (SSSVAPSSSEVV), 149-160 (SSSVAPSSSEVV), 161-172 (SSSVAPSSSEVV), 173-184 (SSSVASSSSEVA), 185-196 (SSSVAPSSSEVV), 197-208 (SSSVASSSSEVA), 209-220 (SSSVAPSSSEVV), 221-232 (SSSVAPSSSEVV), 233-244 (SSSVASSSSEVA), 245-256 (SSSVAPSSSEVV), and 257-268 (SSSVASSTSEAT). The tract at residues 137-268 (SSSVAPSSSE…SVASSTSEAT (132 aa)) is 11 X 12 AA approximate tandem repeats, Ser-rich. The interval 206–299 (EVASSSVAPS…SVSSSSAVSS (94 aa)) is disordered. Residues asparagine 327, asparagine 348, asparagine 368, asparagine 403, and asparagine 404 are each glycosylated (N-linked (GlcNAc...) asparagine). Asparagine 465 carries the GPI-anchor amidated asparagine lipid modification. A propeptide spans 466–487 (GAAKAVIGMGAGALAAVAAMLL) (removed in mature form).

The protein belongs to the SRP1/TIP1 family. The GPI-anchor is attached to the protein in the endoplasmic reticulum and serves to target the protein to the cell surface. There, the glucosamine-inositol phospholipid moiety is cleaved off and the GPI-modified mannoprotein is covalently attached via its lipidless GPI glycan remnant to the 1,6-beta-glucan of the outer cell wall layer.

It localises to the secreted. The protein resides in the cell wall. The protein localises to the membrane. Its function is as follows. Component of the cell wall. Required for anaerobic growth. In Saccharomyces cerevisiae (strain ATCC 204508 / S288c) (Baker's yeast), this protein is Cell wall protein TIR4 (TIR4).